The primary structure comprises 29 residues: Histone H2B (29 aa).

Residues 1 to 29 (MPEPAKSAPKKGSTRTAAKGGKKRRKSRK) are disordered. 2 positions are modified to N6-acetyllysine: Lys6 and Lys11. At Ser13 the chain carries Phosphoserine. The span at 20-29 (GGKKRRKSRK) shows a compositional bias: basic residues.

The protein belongs to the histone H2B family. In terms of assembly, the nucleosome is a histone octamer containing two molecules each of H2A, H2B, H3 and H4 assembled in one H3-H4 heterotetramer and two H2A-H2B heterodimers. The octamer wraps approximately 147 bp of DNA. In terms of processing, monoubiquitination at the C-terminal Lys gives a specific tag for epigenetic transcriptional activation and is also prerequisite for histone H3 'Lys-4' and 'Lys-79' methylation. Phosphorylated during apoptosis; which facilitates apoptotic chromatin condensation.

The protein resides in the nucleus. It is found in the chromosome. Core component of nucleosome. Nucleosomes wrap and compact DNA into chromatin, limiting DNA accessibility to the cellular machineries which require DNA as a template. Histones thereby play a central role in transcription regulation, DNA repair, DNA replication and chromosomal stability. DNA accessibility is regulated via a complex set of post-translational modifications of histones, also called histone code, and nucleosome remodeling. This is Histone H2B from Cyprinus carpio (Common carp).